A 417-amino-acid polypeptide reads, in one-letter code: MRPSTTTLSLLVFLISSILLATTGKNSIIRYTYFPILLIICHLQLTNPPVNTASNIFDGSFEGTTLLNGLQQLNILVLTGVDVNDESGSSVFRRLKSALIYPFNARGVGTKYQIKNLPVLSSFICKEKQGESGLSSFLSSARYRFAIRQLAVSAWQYLLADIGFSLLKNIPTEKRLEYYGPEEEWMPQSLDQLRVRIEATLVFWVTLKAFAEIQSKIATALLTAVGVTSPHDWPPFFGSLREAYTLRGFWGKWWHQQLRWPLTSYSNFITRRVLKLTRSPLERYLNNALVFAQSGIVHVYFNWIKGVQDGDVGCMAFYISFVAGYFLEDHVQGLWRKAFDRTSAQESSLWLLERLVGALWVATFLTIVTPWWVYPFLRLSSSLKMPYSFVDVFGFQGALTVVFMGAAALRIGLNAEP.

The N-terminal stretch at 1–24 (MRPSTTTLSLLVFLISSILLATTG) is a signal peptide. A run of 5 helical transmembrane segments spans residues 150–170 (LAVS…LKNI), 284–304 (YLNN…FNWI), 307–327 (VQDG…GYFL), 356–376 (VGAL…VYPF), and 389–409 (FVDV…AAAL).

It belongs to the wax synthase family.

The protein resides in the membrane. Its pathway is secondary metabolite biosynthesis. Functionally, acetyltransferase; part of the gene cluster that mediates the biosynthesis of the benzazepine alkaloid nanangelenin A which contains an unprecedented 3,4-dihydro-1-benzazepine-2,5-dione-N-prenyl-N-acetoxy-anthranilamide scaffold. The first step of nanangelenin biosynthesis is catalyzed by the indoleamine 2,3-dioxygenase nanC which produces N-formyl-kynurenine through the catabolism of tryptophan. The two-module NRPS nanA then utilizes anthranilate (Ant) and L-kynurenine (L-Kyn) to assemble the dipeptide product nanangelenin B. The first adenylation domain of nanA (A1) loads anthranilate onto the T1 domain, while A2 loads kynurenine, generated through spontaneous nonenzymatic deformylation of the nanC-supplied N-formyl-kynurenine. The peptide bond formation between the tethered amino acids is catalyzed by the first condensation domain (C1) between anthranilate's carbonyl carbon and kynurenine's aliphatic primary amine. The second C domain (C2) catalyzes the final cyclization event between the aromatic amine of kynurenine and the tethered carbonyl carbon, yielding nanangelenin B. The terminal T3 domain enhances the catalytic efficiency of C2, suggesting the T2-tethered Ant-L-Kyn is transferred to T3 prior to cyclization by C2. Once released from nanA, nanangelenin B is then prenylated by the prenyltransferase nanD to form nanangelenin C. Nanangelenin C is then N-hydroxylated by the FAD-dependent monooxygenase nanF and further acetylated by the acetyltransferase nanB to yield nanangelenin F. Finally, the N-methyltransferase nanE methylates the amide nitrogen of 1-benzazepine to convert nanangelenin F into nanangelenin A. NanE is also able to methylate most of the intermediates of the pathway such as nanangelenin B and nanangelenin C to produce nanangelenin D and nanangelenin E, respectively. This is Acetyltransferase nanB from Aspergillus nanangensis.